Reading from the N-terminus, the 82-residue chain is Transcription elongation factor 1 homolog (82 aa).

4 residues coordinate Zn(2+): C26, C29, C50, and C53.

The protein belongs to the ELOF1 family.

It localises to the nucleus. Its function is as follows. Transcription elongation factor implicated in the maintenance of proper chromatin structure in actively transcribed regions. This Manduca sexta (Tobacco hawkmoth) protein is Transcription elongation factor 1 homolog.